A 355-amino-acid polypeptide reads, in one-letter code: Chromatin modification-related protein EAF3 (355 aa).

One can recognise a Tudor-knot domain in the interval 3 to 77 (EVGGKCLAYH…WDEWVSVDRI (75 aa)). The interval 98–150 (ASLAQQQKTKNGGSAKRGGGGAHSESNHGGRRSGSGDRRDSNAEERGIVPSEG) is disordered. Basic and acidic residues predominate over residues 131–144 (GSGDRRDSNAEERG). Positions 163–353 (SRNKLRIHIP…TSSQYEGVAL (191 aa)) constitute an MRG domain.

It belongs to the MRG family. Component of the NuA4 histone acetyltransferase complex.

It is found in the nucleus. Involved in deacetylation of histones, chromatin assembly and chromosome segregation. May act as a transcriptional oscillator, directing histone deacetylases to specific chromosomal domains. Component of the NuA4 histone acetyltransferase complex which is involved in transcriptional activation of selected genes principally by acetylation of nucleosomal histone H4 and H2A. The NuA4 complex is also involved in DNA repair. In Candida glabrata (strain ATCC 2001 / BCRC 20586 / JCM 3761 / NBRC 0622 / NRRL Y-65 / CBS 138) (Yeast), this protein is Chromatin modification-related protein EAF3 (EAF3).